A 374-amino-acid chain; its full sequence is Flavonoid O-methyltransferase-like protein Os11g0303600 (374 aa).

S-adenosyl-L-homocysteine-binding residues include Asp-242, Asp-262, Met-263, and Lys-276. His-280 (proton acceptor) is an active-site residue.

It belongs to the class I-like SAM-binding methyltransferase superfamily. Cation-independent O-methyltransferase family. COMT subfamily.

The chain is Flavonoid O-methyltransferase-like protein Os11g0303600 from Oryza sativa subsp. japonica (Rice).